We begin with the raw amino-acid sequence, 429 residues long: Adenylosuccinate synthetase (429 aa).

GTP is bound by residues 12-18 (GDEGKGK) and 40-42 (GHT). D13 functions as the Proton acceptor in the catalytic mechanism. Positions 13 and 40 each coordinate Mg(2+). IMP contacts are provided by residues 13–16 (DEGK), 38–41 (NAGH), T128, R142, Q224, T239, and R303. H41 (proton donor) is an active-site residue. 299 to 305 (VTTGRPR) contributes to the substrate binding site. Residues R305, 331–333 (LLD), and 413–415 (SVG) contribute to the GTP site.

This sequence belongs to the adenylosuccinate synthetase family. Homodimer. It depends on Mg(2+) as a cofactor.

It localises to the cytoplasm. The catalysed reaction is IMP + L-aspartate + GTP = N(6)-(1,2-dicarboxyethyl)-AMP + GDP + phosphate + 2 H(+). Its pathway is purine metabolism; AMP biosynthesis via de novo pathway; AMP from IMP: step 1/2. Functionally, plays an important role in the de novo pathway of purine nucleotide biosynthesis. Catalyzes the first committed step in the biosynthesis of AMP from IMP. This Clostridioides difficile (strain 630) (Peptoclostridium difficile) protein is Adenylosuccinate synthetase.